A 226-amino-acid polypeptide reads, in one-letter code: ATP synthase F(0) complex subunit a (226 aa).

Helical transmembrane passes span 6-26, 68-88, 97-117, 138-158, 164-184, and 189-209; these read FASFITPTMMGLPIVVTIIMF, WALMIVSLIMFIGSTNLLGLL, QLSMNLSMAIPLWAGAVILGF, IPMLIIIETISLFIQPMALAV, ITAGHLLMHLIGGATLVLMDI, and ATITFIILLLLTVLEFAVALI.

The protein belongs to the ATPase A chain family. Component of the ATP synthase complex composed at least of ATP5F1A/subunit alpha, ATP5F1B/subunit beta, ATP5MC1/subunit c (homooctomer), MT-ATP6/subunit a, MT-ATP8/subunit 8, ATP5ME/subunit e, ATP5MF/subunit f, ATP5MG/subunit g, ATP5MK/subunit k, ATP5MJ/subunit j, ATP5F1C/subunit gamma, ATP5F1D/subunit delta, ATP5F1E/subunit epsilon, ATP5PF/subunit F6, ATP5PB/subunit b, ATP5PD/subunit d, ATP5PO/subunit OSCP. ATP synthase complex consists of a soluble F(1) head domain (subunits alpha(3) and beta(3)) - the catalytic core - and a membrane F(0) domain - the membrane proton channel (subunits c, a, 8, e, f, g, k and j). These two domains are linked by a central stalk (subunits gamma, delta, and epsilon) rotating inside the F1 region and a stationary peripheral stalk (subunits F6, b, d, and OSCP). Interacts with DNAJC30; interaction is direct.

The protein localises to the mitochondrion inner membrane. The enzyme catalyses H(+)(in) = H(+)(out). Its function is as follows. Subunit a, of the mitochondrial membrane ATP synthase complex (F(1)F(0) ATP synthase or Complex V) that produces ATP from ADP in the presence of a proton gradient across the membrane which is generated by electron transport complexes of the respiratory chain. ATP synthase complex consist of a soluble F(1) head domain - the catalytic core - and a membrane F(1) domain - the membrane proton channel. These two domains are linked by a central stalk rotating inside the F(1) region and a stationary peripheral stalk. During catalysis, ATP synthesis in the catalytic domain of F(1) is coupled via a rotary mechanism of the central stalk subunits to proton translocation. With the subunit c (ATP5MC1), forms the proton-conducting channel in the F(0) domain, that contains two crucial half-channels (inlet and outlet) that facilitate proton movement from the mitochondrial intermembrane space (IMS) into the matrix. Protons are taken up via the inlet half-channel and released through the outlet half-channel, following a Grotthuss mechanism. The protein is ATP synthase F(0) complex subunit a of Rattus norvegicus (Rat).